We begin with the raw amino-acid sequence, 408 residues long: 1-deoxy-D-xylulose 5-phosphate reductoisomerase (408 aa).

Thr-26, Gly-27, Ser-28, Ile-29, and Asn-143 together coordinate NADPH. Position 144 (Lys-144) interacts with 1-deoxy-D-xylulose 5-phosphate. Position 145 (Glu-145) interacts with NADPH. Asp-167 is a binding site for Mn(2+). 1-deoxy-D-xylulose 5-phosphate is bound by residues Ser-168, Glu-169, Ser-193, and His-216. A Mn(2+)-binding site is contributed by Glu-169. NADPH is bound at residue Gly-222. Residues Ser-229, Asn-234, Lys-235, and Glu-238 each contribute to the 1-deoxy-D-xylulose 5-phosphate site. Mn(2+) is bound at residue Glu-238.

Belongs to the DXR family. The cofactor is Mg(2+). Mn(2+) is required as a cofactor.

It catalyses the reaction 2-C-methyl-D-erythritol 4-phosphate + NADP(+) = 1-deoxy-D-xylulose 5-phosphate + NADPH + H(+). It participates in isoprenoid biosynthesis; isopentenyl diphosphate biosynthesis via DXP pathway; isopentenyl diphosphate from 1-deoxy-D-xylulose 5-phosphate: step 1/6. Catalyzes the NADPH-dependent rearrangement and reduction of 1-deoxy-D-xylulose-5-phosphate (DXP) to 2-C-methyl-D-erythritol 4-phosphate (MEP). The protein is 1-deoxy-D-xylulose 5-phosphate reductoisomerase of Corynebacterium jeikeium (strain K411).